The sequence spans 399 residues: uncharacterized protein (399 aa).

The next 11 membrane-spanning stretches (helical) occupy residues 19–39, 46–66, 91–111, 123–143, 146–166, 183–203, 225–247, 283–303, 307–327, 335–355, and 369–389; these read IFSI…PLFV, VNLL…LLMY, FYTI…PILG, QFEQ…IIAS, IYAK…IFIA, LLSA…ISYI, VAIL…MPIW, VLLL…LLGF, FGLD…FAYL, LFSI…YLGY, and IEYT…VYLL.

Its subcellular location is the host membrane. In terms of biological role, putative amino acid transporter. This is an uncharacterized protein from Saccharolobus islandicus (Sulfolobus islandicus).